The following is a 685-amino-acid chain: MLQIGEDVDYLLIPREVRLAGGVWRVISKPATKEAEFRERLIQFLQEEGRTLEDVARIIEKSTPHPPQPRKRTKELRVRRVPQMVTPPLRLVVGTYDSSNGSDSELSDFDTSKVKGNRSSSGRTRKVRKMPVSYLGSKFLGSDVESEDDQELVEAFLRRGEKPSAPPPRRRVNLPVPMFENNLGPQPSKADRWREYVSQVSWGKLKQRVKGWAPRSGSEVGQTQQASTAAERAGEMRHSQASSDDDSSRNTGDRSDQMLGTRRWKPKIKWVSLRRCRKEQVPPFAQGTGMPAEEHPEAAENQGAEAAANQRAEPLASPRAEAAASPRAETAADPRVEAVASPRAEAAASPRAEAVADPRAEAAASPRAEAAASPRTEAAASLRAEAVASPRAEAAASPRAEAAADPRAEAAASPIAEAAANQKAELVDSPRAETAADPRAEAAASPRAEAVADPRVEAAASPIAEAAANQKAELVDSPRAETAADPRAEAAASPRAEAAADPRAEVAASPRAEAAASPRAEAEASPRAEAAASPKAEAEANLRVEAAAYLRAGVPPDQRAEAIDSQRAEGPANQRTGATENQRVEVLADQRAGVLHDQREEAGPQGIQEASAGSGSRAQKQVKTVRFQTPGRFSWFRMRRRVFWHTPRLPTLPRRVPRAGEARSLRVLRADIRADVEHREQEEQL.

The tract at residues 93–127 is disordered; that stretch reads VGTYDSSNGSDSELSDFDTSKVKGNRSSSGRTRKV. Phosphoserine occurs at positions 142 and 146. Disordered regions lie at residues 207 to 263, 281 to 538, 558 to 579, and 599 to 623; these read QRVK…GTRR, VPPF…KAEA, QRAE…TGAT, and REEA…KQVK. Over residues 219 to 228 the composition is skewed to polar residues; that stretch reads EVGQTQQAST. Positions 246–256 are enriched in basic and acidic residues; it reads DSSRNTGDRSD. 4 stretches are compositionally biased toward low complexity: residues 299 to 329, 337 to 353, 361 to 401, and 409 to 420; these read AENQ…PRAE, EAVA…PRAE, EAAA…PRAE, and EAAASPIAEAAA. A compositionally biased stretch (basic and acidic residues) spans 425–440; that stretch reads ELVDSPRAETAADPRA. Low complexity predominate over residues 458–468; that stretch reads AAASPIAEAAA. The span at 473–488 shows a compositional bias: basic and acidic residues; the sequence is ELVDSPRAETAADPRA. Over residues 505-519 the composition is skewed to low complexity; it reads EVAASPRAEAAASPR. Residues 558–567 show a composition bias toward basic and acidic residues; sequence QRAEAIDSQR. Residues 611 to 622 are compositionally biased toward polar residues; it reads SAGSGSRAQKQV. Residues 647 to 653 carry the PxLPxI/L motif; mediates interaction with ANKRA2 motif; that stretch reads PRLPTLP.

As to quaternary structure, component of the 3M complex, composed of core components CUL7, CCDC8 and OBSL1. Interacts (via PxLPxI/L motif) with ANKRA2 (via ankyrin repeats); may link the 3M complex to histone deacetylases including HDAC4 and HDAC5.

Its subcellular location is the cytoplasm. It is found in the cytoskeleton. It localises to the microtubule organizing center. The protein resides in the centrosome. Core component of the 3M complex, a complex required to regulate microtubule dynamics and genome integrity. It is unclear how the 3M complex regulates microtubules, it could act by controlling the level of a microtubule stabilizer. Required for localization of CUL7 to the centrosome. In Mus musculus (Mouse), this protein is Coiled-coil domain-containing protein 8 homolog (Ccdc8).